We begin with the raw amino-acid sequence, 94 residues long: Small ribosomal subunit protein uS19c (94 aa).

It belongs to the universal ribosomal protein uS19 family.

The protein localises to the plastid. It is found in the chloroplast. Protein S19 forms a complex with S13 that binds strongly to the 16S ribosomal RNA. This chain is Small ribosomal subunit protein uS19c (rps19), found in Euglena gracilis.